A 436-amino-acid polypeptide reads, in one-letter code: GTPase Der (436 aa).

EngA-type G domains lie at 4 to 167 (PIVA…GEEE) and 176 to 351 (IRLS…ENHK). GTP is bound by residues 10–17 (GRPNVGKS), 57–61 (DTGGI), 119–122 (NKVD), 182–189 (GRPNVGKS), 229–233 (DTAGM), and 294–297 (NKWD). The region spanning 352–436 (KRVQSSTLNE…PIHIIARKRN (85 aa)) is the KH-like domain.

The protein belongs to the TRAFAC class TrmE-Era-EngA-EngB-Septin-like GTPase superfamily. EngA (Der) GTPase family. In terms of assembly, associates with the 50S ribosomal subunit.

Functionally, GTPase that plays an essential role in the late steps of ribosome biogenesis. This Staphylococcus aureus (strain Mu3 / ATCC 700698) protein is GTPase Der.